A 134-amino-acid chain; its full sequence is Small ribosomal subunit protein uS11 (134 aa).

The interval 114-134 is disordered; that stretch reads DVTPVPSDSTRRKGGRRGRRL. The span at 125-134 shows a compositional bias: basic residues; it reads RKGGRRGRRL.

Belongs to the universal ribosomal protein uS11 family.

This Candida albicans (Yeast) protein is Small ribosomal subunit protein uS11 (RPS14).